Consider the following 701-residue polypeptide: Elongation factor G (701 aa).

The region spanning 8-286 (ERIRNIGIIA…AIVHYLPSPV (279 aa)) is the tr-type G domain. GTP contacts are provided by residues 17 to 24 (AHIDAGKT), 85 to 89 (DTPGH), and 139 to 142 (NKMD).

This sequence belongs to the TRAFAC class translation factor GTPase superfamily. Classic translation factor GTPase family. EF-G/EF-2 subfamily.

It is found in the cytoplasm. Functionally, catalyzes the GTP-dependent ribosomal translocation step during translation elongation. During this step, the ribosome changes from the pre-translocational (PRE) to the post-translocational (POST) state as the newly formed A-site-bound peptidyl-tRNA and P-site-bound deacylated tRNA move to the P and E sites, respectively. Catalyzes the coordinated movement of the two tRNA molecules, the mRNA and conformational changes in the ribosome. In Roseiflexus sp. (strain RS-1), this protein is Elongation factor G.